A 144-amino-acid chain; its full sequence is Transcriptional regulator SlyA (144 aa).

The HTH marR-type domain maps to 2-135 (ESSLGSDLAR…LNNIIAKLER (134 aa)). A DNA-binding region (H-T-H motif) is located at residues 49–72 (QIQLAKAIGIEQPSLVRTLDQLES).

This sequence belongs to the SlyA family. In terms of assembly, homodimer.

Its function is as follows. Transcription regulator that can specifically activate or repress expression of target genes. In Blochmanniella floridana, this protein is Transcriptional regulator SlyA.